The sequence spans 161 residues: Putative 4-hydroxy-4-methyl-2-oxoglutarate aldolase (161 aa).

Residues 78–81 and arginine 100 each bind substrate; that span reads GDVI. Residue aspartate 101 participates in a divalent metal cation binding.

This sequence belongs to the class II aldolase/RraA-like family. As to quaternary structure, homotrimer. A divalent metal cation serves as cofactor.

It catalyses the reaction 4-hydroxy-4-methyl-2-oxoglutarate = 2 pyruvate. The enzyme catalyses oxaloacetate + H(+) = pyruvate + CO2. Its function is as follows. Catalyzes the aldol cleavage of 4-hydroxy-4-methyl-2-oxoglutarate (HMG) into 2 molecules of pyruvate. Also contains a secondary oxaloacetate (OAA) decarboxylase activity due to the common pyruvate enolate transition state formed following C-C bond cleavage in the retro-aldol and decarboxylation reactions. In Mycobacterium avium (strain 104), this protein is Putative 4-hydroxy-4-methyl-2-oxoglutarate aldolase.